The following is a 112-amino-acid chain: Protein preY, mitochondrial (112 aa).

Residues 1–34 constitute a mitochondrion transit peptide; the sequence is MLSATCRRLAPALRRLRALSAVAGRFLQVPGARL. Positions 49-95 constitute a TRM112 domain; sequence HPALLQFLVCPLSKKPLRYEASTNELVNEELGIAYPIIDGIPNMIPQ.

It belongs to the PREY family. As to quaternary structure, interacts (via TRM112 domain) with NDUFAF5; the interaction is direct and stabilizes NDUFAF5 protein. Interacts with COQ5; the interaction is direct, stabilizes COQ5 protein and associates PYURF with COQ enzyme complex.

Its subcellular location is the mitochondrion. Functionally, in mitochondria, S-adenosylmethionine-dependent methyltransferase chaperone that supports both coenzyme Q biosynthesis, by stabilizing its components, such as COQ5, and NADH:ubiquinone oxidoreductase complex (complex I, MT-ND1) assembly, by stabilizing complex I assembly factors, such as NDUFAF5. In Mus musculus (Mouse), this protein is Protein preY, mitochondrial (Pyurf).